We begin with the raw amino-acid sequence, 97 residues long: Aspartyl/glutamyl-tRNA(Asn/Gln) amidotransferase subunit C (97 aa).

Over residues 74–84 the composition is skewed to low complexity; the sequence is TPEEATAAAPA. The interval 74-97 is disordered; it reads TPEEATAAAPAREGTAFKVPRIIE.

It belongs to the GatC family. Heterotrimer of A, B and C subunits.

The enzyme catalyses L-glutamyl-tRNA(Gln) + L-glutamine + ATP + H2O = L-glutaminyl-tRNA(Gln) + L-glutamate + ADP + phosphate + H(+). It catalyses the reaction L-aspartyl-tRNA(Asn) + L-glutamine + ATP + H2O = L-asparaginyl-tRNA(Asn) + L-glutamate + ADP + phosphate + 2 H(+). Allows the formation of correctly charged Asn-tRNA(Asn) or Gln-tRNA(Gln) through the transamidation of misacylated Asp-tRNA(Asn) or Glu-tRNA(Gln) in organisms which lack either or both of asparaginyl-tRNA or glutaminyl-tRNA synthetases. The reaction takes place in the presence of glutamine and ATP through an activated phospho-Asp-tRNA(Asn) or phospho-Glu-tRNA(Gln). This Anaeromyxobacter dehalogenans (strain 2CP-1 / ATCC BAA-258) protein is Aspartyl/glutamyl-tRNA(Asn/Gln) amidotransferase subunit C.